The sequence spans 246 residues: uncharacterized protein (246 aa).

This is an uncharacterized protein from Dictyostelium discoideum (Social amoeba).